Consider the following 285-residue polypeptide: Ribosomal protein L11 methyltransferase (285 aa).

S-adenosyl-L-methionine contacts are provided by threonine 131, glycine 154, aspartate 176, and asparagine 223.

This sequence belongs to the methyltransferase superfamily. PrmA family.

It is found in the cytoplasm. The enzyme catalyses L-lysyl-[protein] + 3 S-adenosyl-L-methionine = N(6),N(6),N(6)-trimethyl-L-lysyl-[protein] + 3 S-adenosyl-L-homocysteine + 3 H(+). Methylates ribosomal protein L11. This Brucella melitensis biotype 2 (strain ATCC 23457) protein is Ribosomal protein L11 methyltransferase.